The primary structure comprises 235 residues: Large ribosomal subunit protein uL1 (235 aa).

This sequence belongs to the universal ribosomal protein uL1 family. As to quaternary structure, part of the 50S ribosomal subunit.

In terms of biological role, binds directly to 23S rRNA. The L1 stalk is quite mobile in the ribosome, and is involved in E site tRNA release. Its function is as follows. Protein L1 is also a translational repressor protein, it controls the translation of the L11 operon by binding to its mRNA. This chain is Large ribosomal subunit protein uL1, found in Citrobacter koseri (strain ATCC BAA-895 / CDC 4225-83 / SGSC4696).